The following is a 637-amino-acid chain: Probable potassium transport system protein Kup 2 (637 aa).

The next 12 helical transmembrane spans lie at 18–38 (FLVLLLGSIGVVYGDIGTSPL), 61–81 (LISLMIWTLTIIVTFKYVLFL), 107–127 (MPVLFFAGLIGSALFIGDAMI), 145–165 (PAFSDYVLPLSALIMVGLFAV), 174–194 (AVFFGPITVVWFLAMAWGGLI), 211–231 (ALWFITHAGWAGLIVLGAVFL), 255–275 (WFILVFPALALNYLGQGALVL), 293–313 (ALFPMIILATMATVIASQAVI), 345–365 (IYVPAVNMVLFIGVLVLIFSF), 371–391 (LATAYGISVTGAMVVTTLMAF), 402–422 (AFTAAILLAPLFSIEAVFLAA), and 429–449 (DGGWVPLALAGVIILVMWTWT).

This sequence belongs to the HAK/KUP transporter (TC 2.A.72) family.

Its subcellular location is the cell inner membrane. It carries out the reaction K(+)(in) + H(+)(in) = K(+)(out) + H(+)(out). Transport of potassium into the cell. Likely operates as a K(+):H(+) symporter. The sequence is that of Probable potassium transport system protein Kup 2 from Agrobacterium fabrum (strain C58 / ATCC 33970) (Agrobacterium tumefaciens (strain C58)).